We begin with the raw amino-acid sequence, 231 residues long: Fibrillarin-like rRNA/tRNA 2'-O-methyltransferase (231 aa).

Residues 89 to 90 (TT), 108 to 109 (EF), 133 to 134 (DA), and 153 to 156 (DIAQ) contribute to the S-adenosyl-L-methionine site.

This sequence belongs to the methyltransferase superfamily. Fibrillarin family. Interacts with nop5. Component of box C/D small ribonucleoprotein (sRNP) particles that contain rpl7ae, FlpA and nop5, plus a guide RNA.

Functionally, involved in pre-rRNA and tRNA processing. Utilizes the methyl donor S-adenosyl-L-methionine to catalyze the site-specific 2'-hydroxyl methylation of ribose moieties in rRNA and tRNA. Site specificity is provided by a guide RNA that base pairs with the substrate. Methylation occurs at a characteristic distance from the sequence involved in base pairing with the guide RNA. The sequence is that of Fibrillarin-like rRNA/tRNA 2'-O-methyltransferase from Sulfolobus acidocaldarius (strain ATCC 33909 / DSM 639 / JCM 8929 / NBRC 15157 / NCIMB 11770).